The chain runs to 2012 residues: Cell adhesion molecule DSCAM (2012 aa).

An N-terminal signal peptide occupies residues 1 to 17 (MWILALSLFQSFANVFS). Topologically, residues 18 to 1595 (EDLHSSLYFV…GLTTNEGLKM (1578 aa)) are extracellular. Residues Asn-28 and Asn-78 are each glycosylated (N-linked (GlcNAc...) asparagine). Ig-like C2-type domains follow at residues 39 to 129 (TTGT…YTVR), 125 to 216 (PYTV…ARLF), 225 to 305 (PSIL…AKVI), 313 to 401 (PLKA…VQVV), 407 to 500 (PKII…ARIN), 504 to 592 (PASI…VHVT), 596 to 685 (PPFI…SQLI), 690 to 783 (PKFV…MYLT), and 787 to 883 (PAMI…LTVQ). 5 cysteine pairs are disulfide-bonded: Cys-46-Cys-102, Cys-145-Cys-197, Cys-246-Cys-293, Cys-335-Cys-385, and Cys-428-Cys-484. N-linked (GlcNAc...) asparagine glycosylation is found at Asn-470, Asn-487, Asn-512, Asn-556, Asn-658, Asn-666, Asn-710, Asn-748, and Asn-795. 2 cysteine pairs are disulfide-bonded: Cys-525–Cys-575 and Cys-617–Cys-669. A disulfide bond links Cys-711 and Cys-766. The cysteines at positions 809 and 865 are disulfide-linked. 4 consecutive Fibronectin type-III domains span residues 885–982 (PPDP…ADEA), 987–1086 (PPQE…TLED), 1091–1187 (PPEN…TKED), and 1191–1285 (PPAG…AKAP). Asn-924 carries an N-linked (GlcNAc...) asparagine glycan. Residues Asn-1142, Asn-1160, Asn-1250, Asn-1271, and Asn-1341 are each glycosylated (N-linked (GlcNAc...) asparagine). Residues 1285 to 1377 (PARILTFSGT…DEIILNLQVQ (93 aa)) form the Ig-like C2-type 10 domain. A disulfide bond links Cys-1307 and Cys-1359. Fibronectin type-III domains lie at 1379–1473 (PPDQ…TLGK) and 1474–1575 (EPQF…TIPP). The N-linked (GlcNAc...) asparagine glycan is linked to Asn-1488. The helical transmembrane segment at 1596–1616 (LVTISCILVGVLLLFVLLLVV) threads the bilayer. Topologically, residues 1617–2012 (RRRRREQRLK…NPYAKSYTLV (396 aa)) are cytoplasmic. The segment at 1617–2012 (RRRRREQRLK…NPYAKSYTLV (396 aa)) is required for netrin-mediated axon repulsion of neuronal growth cones. Disordered regions lie at residues 1718-1810 (LVDV…ASST), 1855-1883 (TDSL…DGGR), and 1971-2012 (LPQR…YTLV). Over residues 1799-1809 (SSMVSTESASS) the composition is skewed to low complexity. The segment covering 1855-1865 (TDSLTSSTPSE) has biased composition (polar residues).

Homodimer; mediates homophilic interactions to promote cell adhesion. Interacts with DCC; the interaction is abolished in response to NTN1. Interacts (via extracellular domain) with NTN1. Interacts (via extracellular domain) with UNC5C (via Ig-like C2-type domain). Interacts with PTK2. Interacts with FYN. Phosphorylated at tyrosine residues. Phosphorylation is enhanced by NTN1. In terms of tissue distribution, primarily expressed in brain.

The protein resides in the secreted. It is found in the cell membrane. It localises to the cell projection. The protein localises to the axon. Its subcellular location is the dendrite. The protein resides in the growth cone. It is found in the synapse. Its function is as follows. Cell adhesion molecule that plays a role in neuronal self-avoidance. Promotes repulsion between specific neuronal processes of either the same cell or the same subtype of cells. Mediates within retinal amacrine and ganglion cell subtypes both isoneuronal self-avoidance for creating an orderly dendritic arborization and heteroneuronal self-avoidance to maintain the mosaic spacing between amacrine and ganglion cell bodies. Receptor for netrin required for axon guidance independently of and in collaboration with the receptor DCC. Might also collaborate with UNC5C in NTN1-mediated axon repulsion independently of DCC. In spinal cord development plays a role in guiding commissural axons projection and pathfinding across the ventral midline to reach the floor plate upon ligand binding. Mediates intracellular signaling by stimulating the activation of MAPK8 and MAP kinase p38. Adhesion molecule that promotes lamina-specific synaptic connections in the retina: expressed in specific subsets of interneurons and retinal ganglion cells (RGCs) and promotes synaptic connectivity via homophilic interactions. This chain is Cell adhesion molecule DSCAM (DSCAM), found in Homo sapiens (Human).